Consider the following 317-residue polypeptide: Porphobilinogen deaminase (317 aa).

Cys-245 is modified (S-(dipyrrolylmethanemethyl)cysteine).

This sequence belongs to the HMBS family. As to quaternary structure, monomer. The cofactor is dipyrromethane.

It carries out the reaction 4 porphobilinogen + H2O = hydroxymethylbilane + 4 NH4(+). It functions in the pathway porphyrin-containing compound metabolism; protoporphyrin-IX biosynthesis; coproporphyrinogen-III from 5-aminolevulinate: step 2/4. The protein operates within porphyrin-containing compound metabolism; chlorophyll biosynthesis. Functionally, tetrapolymerization of the monopyrrole PBG into the hydroxymethylbilane pre-uroporphyrinogen in several discrete steps. In Parasynechococcus marenigrum (strain WH8102), this protein is Porphobilinogen deaminase.